A 297-amino-acid polypeptide reads, in one-letter code: Thoeris protein ThsA (297 aa).

2 consecutive transmembrane segments (helical) span residues 32–52 and 57–77; these read ALSI…FLDL and RLII…VQFI.

The protein resides in the cell membrane. With respect to regulation, activated by a signal molecule generated by ThsB. Its function is as follows. Probable membrane protein component of the Thoeris antiviral defense system, composed of ThsA and ThsB. Expression of ThsA and ThsB in B.subtilis (strain BEST7003) confers resistance to phages SBSphiC, SBSphiJ and SPO1. Activation by a signal generated by ThsB leads to phage resistance. This Bacillus amyloliquefaciens (strain Y2) (Bacillus amyloliquefaciens subsp. plantarum (strain B9601-Y2)) protein is Thoeris protein ThsA.